Reading from the N-terminus, the 528-residue chain is Acid-sensing ion channel 1 (528 aa).

Over 1 to 49 the chain is Cytoplasmic; the sequence is MELKAEEEEVGGVQPVSIQAFASSSTLHGLAHIFSYERLSLKRALWALC. The chain crosses the membrane as a helical span at residues 50-66; that stretch reads FLGSLAVLLCVCTERVQ. Topologically, residues 67-427 are extracellular; sequence YYFHYHHVTK…ETIEQKKAYE (361 aa). 7 cysteine pairs are disulfide-bonded: cysteine 93/cysteine 194, cysteine 172/cysteine 179, cysteine 290/cysteine 367, cysteine 310/cysteine 363, cysteine 314/cysteine 361, cysteine 323/cysteine 345, and cysteine 325/cysteine 337. Asparagine 368 and asparagine 395 each carry an N-linked (GlcNAc...) asparagine glycan. Residues 428 to 458 traverse the membrane as a discontinuously helical segment; the sequence is IAGLLGDIGGQMGLFIGASILTVLELFDYAY. Positions 444–446 match the GAS motif; ion selectivity filter motif; the sequence is GAS. Topologically, residues 459–528 are cytoplasmic; sequence EVIKHKLCRR…ARGTFEDFTC (70 aa). Serine 479 bears the Phosphoserine; by PKA mark. Serine 499 carries the phosphoserine modification.

This sequence belongs to the amiloride-sensitive sodium channel (TC 1.A.6) family. ASIC1 subfamily. As to quaternary structure, forms functional homotrimeric channels. Forms heterotrimers with other ASIC proteins, resulting in channels with distinct properties. Interacts with PICK1; regulates ASIC1 clustering in membranes. Interacts with STOM; alters heterotrimeric channels activity. In terms of processing, pH-gating could be regulated by serine proteases. Phosphorylation by PKA regulates interaction with PICK1 and subcellular localization. Phosphorylation by PKC may regulate the channel. As to expression, expressed in neurons throughout the central and peripheral nervous system.

The protein resides in the cell membrane. It is found in the postsynaptic cell membrane. It localises to the cell projection. The protein localises to the dendrite. It carries out the reaction Na(+)(in) = Na(+)(out). It catalyses the reaction K(+)(in) = K(+)(out). The enzyme catalyses Li(+)(in) = Li(+)(out). The catalysed reaction is Ca(2+)(in) = Ca(2+)(out). Its activity is regulated as follows. Potentiated by FMRFamide-related neuropeptides, which are induced during inflammation and modulate pain responses. Inhibited by the diuretic drug amiloride. Spider venom psalmotoxin-1 inhibits the channel by locking it in its desensitized conformation. The homotrimeric channel is inhibited by the spider venom pi-theraphotoxin-Hm3a. Homotrimeric and heterotrimeric (with ASIC2 isoform 1) channels are inhibited by the snake venom mambalgin-1, which prevents proton-induced transitions from the resting closed state to the active and/or desensitized states. Inhibited by Texas coral snake toxin MitTx1. In terms of biological role, forms voltage-independent, pH-gated trimeric sodium channels that act as postsynaptic excitatory receptors in the nervous system, playing a crucial role in regulating synaptic plasticity, learning, and memory. Upon extracellular pH drop this channel elicits transient, fast activating, and completely desensitizing inward currents. Displays high selectivity for sodium ions but can also permit the permeation of other cations. Regulates more or less directly intracellular calcium concentration and CaMKII phosphorylation, and thereby the density of dendritic spines. Modulates neuronal activity in the circuits underlying innate fear. Has high selectivity for sodium ions, but can also be permeable to other cations including calcium, lithium and potassium. Functionally, produces acid activated currents with a reduced amplitude and inactivates faster. Has high selectivity for sodium ions but also supports a calcium-mediated current which is sustained and maintained as long as acidic conditions are present. Also potentially permeable to lithium and potassium. Its function is as follows. Has no measurable proton-gated sodium channel activity in vitro. In Homo sapiens (Human), this protein is Acid-sensing ion channel 1.